A 531-amino-acid chain; its full sequence is Bifunctional protein TrpGD (531 aa).

The region spanning 3–196 (DILLLDNIDS…LAWAQQKLEP (194 aa)) is the Glutamine amidotransferase type-1 domain. An L-glutamine-binding site is contributed by 57–59 (GPG). The Nucleophile; for GATase activity role is filled by C84. Residues Q88 and 134 to 135 (SL) contribute to the L-glutamine site. Residues H170 and E172 each act as for GATase activity in the active site. Residues 202-531 (PILEKLYQAQ…DRVTALAARG (330 aa)) are anthranilate phosphoribosyltransferase.

This sequence in the C-terminal section; belongs to the anthranilate phosphoribosyltransferase family. In terms of assembly, heterotetramer consisting of two non-identical subunits: a beta subunit (TrpG) and a large alpha subunit (TrpE).

It catalyses the reaction chorismate + L-glutamine = anthranilate + pyruvate + L-glutamate + H(+). It carries out the reaction N-(5-phospho-beta-D-ribosyl)anthranilate + diphosphate = 5-phospho-alpha-D-ribose 1-diphosphate + anthranilate. It participates in amino-acid biosynthesis; L-tryptophan biosynthesis; L-tryptophan from chorismate: step 1/5. Its pathway is amino-acid biosynthesis; L-tryptophan biosynthesis; L-tryptophan from chorismate: step 2/5. Cooperatively feedback inhibited by tryptophan. Its function is as follows. Part of a heterotetrameric complex that catalyzes the two-step biosynthesis of anthranilate, an intermediate in the biosynthesis of L-tryptophan. In the first step, the glutamine-binding beta subunit (TrpG) of anthranilate synthase (AS) provides the glutamine amidotransferase activity which generates ammonia as a substrate that, along with chorismate, is used in the second step, catalyzed by the large alpha subunit of AS (TrpE) to produce anthranilate. In the absence of TrpG, TrpE can synthesize anthranilate directly from chorismate and high concentrations of ammonia. In addition to synthesizing anthranilate, it also catalyzes the second step of the pathway, the transfer of the phosphoribosyl group of 5-phosphorylribose-1-pyrophosphate (PRPP) to anthranilate. This Escherichia coli (strain K12) protein is Bifunctional protein TrpGD (trpGD).